Reading from the N-terminus, the 528-residue chain is FAD-dependent monooxygenase DEP2 (528 aa).

A signal peptide spans 1 to 23; that stretch reads MEDGRSTFKVIIIGAGVTGLTLA. FAD-binding residues include aspartate 37, arginine 110, aspartate 311, and glycine 324. The helical transmembrane segment at 479–499 threads the bilayer; sequence VFPQILGVLMVMWSSVWLFHL. Asparagine 521 is a glycosylation site (N-linked (GlcNAc...) asparagine).

It belongs to the paxM FAD-dependent monooxygenase family. FAD is required as a cofactor.

The protein resides in the membrane. Its pathway is polyketide biosynthesis. In terms of biological role, FAD-dependent monooxygenase; part of the gene cluster that mediates the biosynthesis of depudecin, a highly oxidized eleven-carbon linear polyketide that acts as a histone deacetylase (HDAC) inhibitor and makes a small contribution to pathogenesis. The reducing polyketide synthase DEP5 is the central enzyme in depudecin biosynthesis by yielding the backbone polyketide chain. The monooxygenases DEP2 and DEP4, as well as the uncharacterized protein DEP1, then act as tailoring enzymes to modify the intermediate polyketide chain into depudecin. The sequence is that of FAD-dependent monooxygenase DEP2 from Alternaria brassicicola (Dark leaf spot agent).